Consider the following 613-residue polypeptide: Protein translocase subunit SecD (613 aa).

6 helical membrane-spanning segments follow: residues 10–30 (ALVVAVAILSIYQLVPSWFYF), 452–472 (KGTLAALVGLALVVVFMVVYY), 477–497 (LVADVALALNGLLVLAVMSMI), 503–523 (LPGIAGFVLTLGMAVDANVLI), 548–568 (VFWTIVDSHVTTLVAGVVLFQ), and 576–596 (GFAVTLIIGLVASMFTSIVVT).

The protein belongs to the SecD/SecF family. SecD subfamily. In terms of assembly, forms a complex with SecF. Part of the essential Sec protein translocation apparatus which comprises SecA, SecYEG and auxiliary proteins SecDF-YajC and YidC.

Its subcellular location is the cell inner membrane. In terms of biological role, part of the Sec protein translocase complex. Interacts with the SecYEG preprotein conducting channel. SecDF uses the proton motive force (PMF) to complete protein translocation after the ATP-dependent function of SecA. The sequence is that of Protein translocase subunit SecD from Anaeromyxobacter dehalogenans (strain 2CP-C).